Consider the following 178-residue polypeptide: uncharacterized protein (178 aa).

This is an uncharacterized protein from Sulfolobus islandicus filamentous virus (isolate Iceland/Hveragerdi) (SIFV).